The following is a 75-amino-acid chain: Large ribosomal subunit protein bL31 (75 aa).

Belongs to the bacterial ribosomal protein bL31 family. Type A subfamily. In terms of assembly, part of the 50S ribosomal subunit.

Functionally, binds the 23S rRNA. The polypeptide is Large ribosomal subunit protein bL31 (Acidiphilium cryptum (strain JF-5)).